We begin with the raw amino-acid sequence, 25 residues long: Caerin-2.2 (25 aa).

The protein belongs to the frog skin active peptide (FSAP) family. Caerin subfamily. Expressed by the skin parotoid and/or rostral glands.

It is found in the secreted. Antimicrobial peptide, that adopts an alpha helical conformation which can disrupt bacterial membranes. Each caerin displays a different antimicrobial specificity. This Ranoidea caerulea (Green tree frog) protein is Caerin-2.2.